Reading from the N-terminus, the 219-residue chain is Phosphate-specific transport system accessory protein PhoU homolog (219 aa).

Belongs to the PhoU family. Homodimer.

It is found in the cytoplasm. Functionally, plays a role in the regulation of phosphate uptake. Encoded together with proteins of the phosphate-specific transport (Pst) system in the polycistronic pstSCAB-phoU operon. The sequence is that of Phosphate-specific transport system accessory protein PhoU homolog from Clostridium acetobutylicum (strain ATCC 824 / DSM 792 / JCM 1419 / IAM 19013 / LMG 5710 / NBRC 13948 / NRRL B-527 / VKM B-1787 / 2291 / W).